Consider the following 166-residue polypeptide: Interferon gamma (166 aa).

Residues 1 to 23 (MKYTSYILALQLCVLLGFSGSYG) form the signal peptide. A Pyrrolidone carboxylic acid modification is found at glutamine 24. Residues asparagine 39 and asparagine 106 are each glycosylated (N-linked (GlcNAc...) asparagine).

The protein belongs to the type II (or gamma) interferon family. Homodimer. Interacts with IFNGR1 (via extracellular domain); this interaction promotes IFNGR1 dimerization. In terms of tissue distribution, released primarily from activated T lymphocytes.

It localises to the secreted. In terms of biological role, type II interferon produced by immune cells such as T-cells and NK cells that plays crucial roles in antimicrobial, antiviral, and antitumor responses by activating effector immune cells and enhancing antigen presentation. Primarily signals through the JAK-STAT pathway after interaction with its receptor IFNGR1 to affect gene regulation. Upon IFNG binding, IFNGR1 intracellular domain opens out to allow association of downstream signaling components JAK2, JAK1 and STAT1, leading to STAT1 activation, nuclear translocation and transcription of IFNG-regulated genes. Many of the induced genes are transcription factors such as IRF1 that are able to further drive regulation of a next wave of transcription. Plays a role in class I antigen presentation pathway by inducing a replacement of catalytic proteasome subunits with immunoproteasome subunits. In turn, increases the quantity, quality, and repertoire of peptides for class I MHC loading. Increases the efficiency of peptide generation also by inducing the expression of activator PA28 that associates with the proteasome and alters its proteolytic cleavage preference. Up-regulates as well MHC II complexes on the cell surface by promoting expression of several key molecules such as cathepsins B/CTSB, H/CTSH, and L/CTSL. Participates in the regulation of hematopoietic stem cells during development and under homeostatic conditions by affecting their development, quiescence, and differentiation. The sequence is that of Interferon gamma (IFNG) from Cervus elaphus (Red deer).